Reading from the N-terminus, the 176-residue chain is Nicotinamide-nucleotide adenylyltransferase (176 aa).

The protein belongs to the archaeal NMN adenylyltransferase family.

It localises to the cytoplasm. The catalysed reaction is beta-nicotinamide D-ribonucleotide + ATP + H(+) = diphosphate + NAD(+). Its pathway is cofactor biosynthesis; NAD(+) biosynthesis; NAD(+) from nicotinamide D-ribonucleotide: step 1/1. This is Nicotinamide-nucleotide adenylyltransferase from Halorubrum lacusprofundi (strain ATCC 49239 / DSM 5036 / JCM 8891 / ACAM 34).